The chain runs to 33 residues: Photosystem II reaction center protein Psb30 (33 aa).

Residues 5 to 25 (IVFQLTSLVLILAAGPLVVVL) traverse the membrane as a helical segment.

Belongs to the Psb30/Ycf12 family. PSII is composed of 1 copy each of membrane proteins PsbA, PsbB, PsbC, PsbD, PsbE, PsbF, PsbH, PsbI, PsbJ, PsbK, PsbL, PsbM, PsbT, PsbX, PsbY, PsbZ, Psb30/Ycf12, peripheral proteins of the oxygen-evolving complex and a large number of cofactors. It forms dimeric complexes.

The protein resides in the plastid. It is found in the chloroplast thylakoid membrane. In terms of biological role, a core subunit of photosystem II (PSII), probably helps stabilize the reaction center. The chain is Photosystem II reaction center protein Psb30 from Tetradesmus obliquus (Green alga).